The chain runs to 706 residues: Protein argonaute (706 aa).

The segment at 1–108 (MGKEALLNLY…ELFRDFLTKT (108 aa)) is N-terminal domain. The linker L1 stretch occupies residues 109-165 (KVKDKFISDFYKKFRDKITVQGKNRKIALIPEVNEKVLKSEEGYFLLHLDLKFRIQP). Residues 168–259 (TLQTLLERND…YPATILKPVL (92 aa)) form the PAZ domain. The interval 263 to 334 (NLEDEERNEV…AKGKNTKVIT (72 aa)) is linker L2. The tract at residues 335–448 (NLRKFLELCR…YDFVKRELLK (114 aa)) is mid domain. The region spanning 419-694 (LVIVFLEEYP…ITKLMLRGIE (276 aa)) is the Piwi domain. The segment at 449 to 706 (KMIPSQVILN…KKEGDIMYWL (258 aa)) is PIWI domain. Residues aspartate 502, glutamate 541, and aspartate 571 contribute to the active site. Aspartate 502 is a binding site for Mn(2+). Aspartate 571 is a Mn(2+) binding site. Positions 612–650 (FIKGYFYKLSEDSVILATYNQVYEGTHQPIKVRKVYGEL) are PIWI box. Aspartate 683 is an active-site residue. Aspartate 683 lines the Mn(2+) pocket.

It belongs to the argonaute family. Long pAgo subfamily. Requires Mg(2+) as cofactor.

A DNA-guided RNA endonuclease. Uses short ssDNA sequences as guides (gDNA) to bind complementary target strands, resulting in cleavage of the target RNA. The cleavage site is 10 nucleotides downstream of the residue base paired with the 5'-end of the gDNA. Binds ssDNA better than ssRNA, binds dsDNA and DNA-RNA hybrids but does not bind dsRNA. A 2 nucleotide 3'-overhang (possibly on the guide strand) may help load nucleic acids into the complex. This chain is Protein argonaute, found in Aquifex aeolicus (strain VF5).